We begin with the raw amino-acid sequence, 180 residues long: Shikimate kinase (180 aa).

ATP is bound at residue 15-20 (GAGKTT). Thr-19 lines the Mg(2+) pocket. Asp-37, Arg-61, and Gly-83 together coordinate substrate. Arg-121 contacts ATP. Arg-140 provides a ligand contact to substrate.

The protein belongs to the shikimate kinase family. Monomer. Requires Mg(2+) as cofactor.

It localises to the cytoplasm. It catalyses the reaction shikimate + ATP = 3-phosphoshikimate + ADP + H(+). It participates in metabolic intermediate biosynthesis; chorismate biosynthesis; chorismate from D-erythrose 4-phosphate and phosphoenolpyruvate: step 5/7. In terms of biological role, catalyzes the specific phosphorylation of the 3-hydroxyl group of shikimic acid using ATP as a cosubstrate. In Psychrobacter sp. (strain PRwf-1), this protein is Shikimate kinase.